Here is a 465-residue protein sequence, read N- to C-terminus: uncharacterized protein (465 aa).

3 disordered regions span residues 1–55 (MNSS…SSHQ), 70–164 (DFSE…VEGQ), and 221–313 (TTDN…KQRV). Residues 40 to 50 (ENYKDNSDHSN) are compositionally biased toward basic and acidic residues. The segment covering 73–82 (ESFNDNQNLK) has biased composition (polar residues). The span at 83–134 (NFNTTDNNFNDDYNNDYDSNNDSNNDSNNDSNNDYDNESNNYFNNDSNNDSN) shows a compositional bias: low complexity. The segment covering 141 to 150 (ETTKHKLPIE) has biased composition (basic and acidic residues). Over residues 221–235 (TTDNQSNTESSQENN) the composition is skewed to low complexity. 2 stretches are compositionally biased toward basic and acidic residues: residues 236–249 (VIKK…DKQP) and 259–275 (IVPK…KSIK). Residues 288 to 306 (IDQSNKLGKSYNTNNNNSK) are compositionally biased toward polar residues. Residues 390–423 (NKASIAELKKMRLEQRKREIEEKRRQVENKKPDS) are a coiled coil.

This is an uncharacterized protein from Acanthamoeba polyphaga mimivirus (APMV).